We begin with the raw amino-acid sequence, 139 residues long: Protein AC53 (139 aa).

The protein resides in the host cytoplasm. It is found in the host nucleus. Its function is as follows. Plays a role in nucleocapsid assembly. In Lepidoptera (butterflies and moths), this protein is Protein AC53 (AC53).